The following is a 488-amino-acid chain: UDP-GalNAc:beta-1,3-N-acetylgalactosaminyltransferase 2 (488 aa).

Topologically, residues 1 to 2 (MR) are cytoplasmic. A helical; Signal-anchor for type II membrane protein transmembrane segment spans residues 3-23 (HLLLLFLCPCAIGVAFHLWLF). N-linked (GlcNAc...) asparagine glycans are attached at residues Asn-24, Asn-105, and Asn-162. The Lumenal segment spans residues 24–488 (NFSGLFTWFP…CGNPCACEDR (465 aa)).

Belongs to the glycosyltransferase 31 family.

The protein localises to the golgi apparatus membrane. It localises to the endoplasmic reticulum. It carries out the reaction 3-O-(N-acetyl-beta-D-glucosaminyl-(1-&gt;4)-alpha-D-mannosyl)-L-threonyl-[protein] + UDP-N-acetyl-alpha-D-galactosamine = 3-O-[beta-D-GalNAc-(1-&gt;3)-beta-D-GlcNAc-(1-&gt;4)-alpha-D-Man]-L-Thr-[protein] + UDP + H(+). It participates in protein modification; protein glycosylation. In terms of biological role, beta-1,3-N-acetylgalactosaminyltransferase that synthesizes a unique carbohydrate structure, GalNAc-beta-1-3GlcNAc, on N- and O-glycans. Has no galactose nor galactosaminyl transferase activity toward any acceptor substrate. Involved in alpha-dystroglycan (dag1) glycosylation. This Xenopus tropicalis (Western clawed frog) protein is UDP-GalNAc:beta-1,3-N-acetylgalactosaminyltransferase 2 (b3galnt2).